The chain runs to 568 residues: U6 small nuclear RNA (adenine-(43)-N(6))-methyltransferase (568 aa).

Residues 1–20 are disordered; the sequence is MSEIDTNDIKKEMDNKNYRD. Over residues 7-20 the composition is skewed to basic and acidic residues; that stretch reads NDIKKEMDNKNYRD. Arginine 117, glycine 151, aspartate 175, and asparagine 250 together coordinate S-adenosyl-L-methionine. Disordered regions lie at residues 363-383, 403-431, and 503-538; these read KENN…INNN, NLDS…NNNN, and DPKI…NKNN. Low complexity-rich tracts occupy residues 365–383, 409–431, and 507–538; these read NNNI…INNN, NNNN…NNNN, and NNNN…NKNN.

This sequence belongs to the methyltransferase superfamily. METTL16/RlmF family.

The enzyme catalyses adenosine in U6 snRNA + S-adenosyl-L-methionine = N(6)-methyladenosine in U6 snRNA + S-adenosyl-L-homocysteine + H(+). In terms of biological role, RNA N6-methyltransferase that mediates N6-methylation of adenine of U6 small nuclear RNA (U6 snRNA). The sequence is that of U6 small nuclear RNA (adenine-(43)-N(6))-methyltransferase from Dictyostelium discoideum (Social amoeba).